A 96-amino-acid chain; its full sequence is Co-chaperonin GroES (96 aa).

This sequence belongs to the GroES chaperonin family. As to quaternary structure, heptamer of 7 subunits arranged in a ring. Interacts with the chaperonin GroEL.

It localises to the cytoplasm. Functionally, together with the chaperonin GroEL, plays an essential role in assisting protein folding. The GroEL-GroES system forms a nano-cage that allows encapsulation of the non-native substrate proteins and provides a physical environment optimized to promote and accelerate protein folding. GroES binds to the apical surface of the GroEL ring, thereby capping the opening of the GroEL channel. This Nitrosomonas eutropha (strain DSM 101675 / C91 / Nm57) protein is Co-chaperonin GroES.